Here is a 372-residue protein sequence, read N- to C-terminus: Adaptive-response sensory kinase SasA (372 aa).

One can recognise a Histidine kinase domain in the interval 147–360 (MVAHELRTPL…CFHFTVPVWQ (214 aa)). His150 is subject to Phosphohistidine; by autocatalysis.

Homooligomerizes. Interacts with KaiC. Participates in the KaiBC complex, whose core is composed of a KaiC homohexamer and 6 KaiB.

It catalyses the reaction ATP + protein L-histidine = ADP + protein N-phospho-L-histidine.. In terms of biological role, member of the two-component regulatory system SasA/RpaA involved in genome-wide circadian gene expression. One of several clock output pathways. Participates in the Kai clock protein complex, the main circadian regulator in cyanobacteria, via its interaction with KaiC. KaiC enhances the autophosphorylation activity of SasA, which then transfers its phosphate group to RpaA to activate it. In addition to its output function, recruits fold-shifted KaiB (KaiB(fs)) to KaiC to cooperatively form the KaiB(6):KaiC(6) complex (independent of SasA kinase activity). Required for robustness of the circadian rhythm of gene expression and is involved in clock output, also required for adaptation to light/dark cycles. This is Adaptive-response sensory kinase SasA from Prochlorococcus marinus (strain MIT 9301).